A 78-amino-acid chain; its full sequence is Small ribosomal subunit protein bS18 (78 aa).

This sequence belongs to the bacterial ribosomal protein bS18 family. Part of the 30S ribosomal subunit. Forms a tight heterodimer with protein bS6.

In terms of biological role, binds as a heterodimer with protein bS6 to the central domain of the 16S rRNA, where it helps stabilize the platform of the 30S subunit. The sequence is that of Small ribosomal subunit protein bS18 from Parafrankia sp. (strain EAN1pec).